A 378-amino-acid polypeptide reads, in one-letter code: Ribosomal RNA large subunit methyltransferase G (378 aa).

This sequence belongs to the methyltransferase superfamily. RlmG family.

It is found in the cytoplasm. The catalysed reaction is guanosine(1835) in 23S rRNA + S-adenosyl-L-methionine = N(2)-methylguanosine(1835) in 23S rRNA + S-adenosyl-L-homocysteine + H(+). In terms of biological role, specifically methylates the guanine in position 1835 (m2G1835) of 23S rRNA. The polypeptide is Ribosomal RNA large subunit methyltransferase G (Shigella flexneri serotype 5b (strain 8401)).